The following is a 500-amino-acid chain: Aspartyl/glutamyl-tRNA(Asn/Gln) amidotransferase subunit B (500 aa).

The protein belongs to the GatB/GatE family. GatB subfamily. As to quaternary structure, heterotrimer of A, B and C subunits.

The catalysed reaction is L-glutamyl-tRNA(Gln) + L-glutamine + ATP + H2O = L-glutaminyl-tRNA(Gln) + L-glutamate + ADP + phosphate + H(+). The enzyme catalyses L-aspartyl-tRNA(Asn) + L-glutamine + ATP + H2O = L-asparaginyl-tRNA(Asn) + L-glutamate + ADP + phosphate + 2 H(+). In terms of biological role, allows the formation of correctly charged Asn-tRNA(Asn) or Gln-tRNA(Gln) through the transamidation of misacylated Asp-tRNA(Asn) or Glu-tRNA(Gln) in organisms which lack either or both of asparaginyl-tRNA or glutaminyl-tRNA synthetases. The reaction takes place in the presence of glutamine and ATP through an activated phospho-Asp-tRNA(Asn) or phospho-Glu-tRNA(Gln). This Rhizobium leguminosarum bv. trifolii (strain WSM2304) protein is Aspartyl/glutamyl-tRNA(Asn/Gln) amidotransferase subunit B.